The chain runs to 152 residues: Large ribosomal subunit protein uL22 (152 aa).

The protein belongs to the universal ribosomal protein uL22 family. In terms of assembly, part of the 50S ribosomal subunit.

Its function is as follows. This protein binds specifically to 23S rRNA. It makes multiple contacts with different domains of the 23S rRNA in the assembled 50S subunit and ribosome. The globular domain of the protein is located near the polypeptide exit tunnel on the outside of the subunit, while an extended beta-hairpin is found that lines the wall of the exit tunnel in the center of the 70S ribosome. The protein is Large ribosomal subunit protein uL22 of Nitrosopumilus maritimus (strain SCM1).